We begin with the raw amino-acid sequence, 357 residues long: Protein phosphatase 1 regulatory subunit 42 (357 aa).

7 LRR repeats span residues 29–50, 51–72, 73–94, 95–116, 117–138, 147–168, and 169–190; these read KITH…SLCR, NLSV…NYTT, NLTH…SSLK, KLEK…EGLE, ELRE…LFDP, SLST…EILE, and NLNH…ELLL. One can recognise an LRRCT domain in the interval 204 to 242; the sequence is NPVCLKPKYRDKLILTSKSLEFLDGKEIKDMERQFLMNW. The disordered stretch occupies residues 329-357; the sequence is ESSLTKNDIHEPHLLQNPKVKENLSEKKE. The span at 335–357 shows a compositional bias: basic and acidic residues; sequence NDIHEPHLLQNPKVKENLSEKKE.

In terms of assembly, interacts with PPP1CC isoform gamma-2; the interaction is direct. Interacts with actin, dynein, KIF5B, KIFC1 and tubulin. Associates with microtubules. Post-translationally, phosphorylated; during the first round of spermatogenesis with a marginal increase at 21 days after birth. Testis-specific. Expressed in spermatids (at protein level). Testis-specific.

The protein localises to the cytoplasm. It localises to the cytoskeleton. The protein resides in the microtubule organizing center. It is found in the centrosome. Its function is as follows. Regulates phosphatase activity of protein phosphatase 1 (PP1) complexes in the testis. The polypeptide is Protein phosphatase 1 regulatory subunit 42 (Ppp1r42) (Mus musculus (Mouse)).